The primary structure comprises 774 residues: Polyribonucleotide nucleotidyltransferase (774 aa).

2 residues coordinate Mg(2+): aspartate 485 and aspartate 491. In terms of domain architecture, KH spans 552-611; it reads PRIETMSVPKDKIRDIIGTGGKIIREIVATTGAKVDIDDDGTVKISSSDTAQIEAARNWI. Residues 621-689 form the S1 motif domain; sequence GKIYTGKVVN…NRGKVRLSMR (69 aa). The tract at residues 689–774 is disordered; the sequence is RVVDQETGEE…APAFLTRDDD (86 aa). Basic and acidic residues predominate over residues 700-755; that stretch reads PDTRPPREERPRGDRGDRGDRGPRRDGDRRREGGDRGPRRDRGDRGDRPRRERSEG.

Belongs to the polyribonucleotide nucleotidyltransferase family. Mg(2+) is required as a cofactor.

It localises to the cytoplasm. It carries out the reaction RNA(n+1) + phosphate = RNA(n) + a ribonucleoside 5'-diphosphate. Functionally, involved in mRNA degradation. Catalyzes the phosphorolysis of single-stranded polyribonucleotides processively in the 3'- to 5'-direction. This is Polyribonucleotide nucleotidyltransferase from Rhizorhabdus wittichii (strain DSM 6014 / CCUG 31198 / JCM 15750 / NBRC 105917 / EY 4224 / RW1) (Sphingomonas wittichii).